A 186-amino-acid chain; its full sequence is Biphenyl dioxygenase subunit beta (186 aa).

This sequence belongs to the bacterial ring-hydroxylating dioxygenase beta subunit family. As to quaternary structure, heterohexamer consisting of 3 BphA subunits and 3 BphE subunits. A ferredoxin (BphF) and a ferredoxin reductase (BphG) must be present to obtain activity.

It carries out the reaction biphenyl + NADH + O2 + H(+) = (2R,3S)-3-phenylcyclohexa-3,5-diene-1,2-diol + NAD(+). It functions in the pathway xenobiotic degradation; biphenyl degradation; 2-hydroxy-2,4-pentadienoate and benzoate from biphenyl: step 1/4. Functionally, the beta subunit may be responsible for the substrate specificity of the enzyme. The polypeptide is Biphenyl dioxygenase subunit beta (bphE) (Comamonas testosteroni (Pseudomonas testosteroni)).